The following is a 711-amino-acid chain: T-box transcription factor TBX2 (711 aa).

Residues 109–287 (LEAKELWDQF…NNPFAKGFRD (179 aa)) constitute a DNA-binding region (T-box). The interval 313-449 (PERDGAESDA…GEGKEPSLAP (137 aa)) is disordered. Pro residues predominate over residues 326–340 (DPPPAREPPPSPSAA). Phosphoserine occurs at positions 336, 342, and 360. Composition is skewed to basic and acidic residues over residues 363 to 372 (EPERTGEERS), 390 to 409 (TEPE…KEPT), and 421 to 444 (SLEK…EGKE). The segment at 518-602 (GSGSSGGAGP…ATSAAAAAAA (85 aa)) is repression domain 1 (RD1). 4 positions are modified to phosphoserine: serine 623, serine 652, serine 656, and serine 675. Positions 640–687 (TGLAAEGSKGGNSREPSPLPELALRKVGGPSRGALSPSGSAKEAASEL) are disordered.

In terms of assembly, binds DNA as a monomer. Interacts with CHD4, HDAC1 and HDAC2, perhaps as components of a NuRD-like complex. Interacts with CBX3, HMGB2 and PBX1. Interacts with PML. In terms of processing, phosphorylated. May be phosphorylated by p38 MAPK in response to UV irradiation stress. As to expression, in adults, highest levels in lung. Also found in heart, kidney, and ovary.

It is found in the nucleus. Its function is as follows. Transcription factor which acts as a transcriptional repressor. May also function as a transcriptional activator. Binds to the palindromic T site 5'-TTCACACCTAGGTGTGAA-3' DNA sequence, or a half-site, which are present in the regulatory region of several genes. Required for cardiac atrioventricular canal formation. May cooperate with NKX2.5 to negatively modulate expression of NPPA/ANF in the atrioventricular canal. May play a role as a positive regulator of TGFB2 expression, perhaps acting in concert with GATA4 in the developing outflow tract myocardium. Plays a role in limb pattern formation. Acts as a transcriptional repressor of ADAM10 gene expression, perhaps in concert with histone deacetylase HDAC1 as cofactor. Involved in branching morphogenesis in both developing lungs and adult mammary glands, via negative modulation of target genes; acting redundantly with TBX3. Required, together with TBX3, to maintain cell proliferation in the embryonic lung mesenchyme; perhaps acting downstream of SHH, BMP and TGFbeta signaling. Involved in modulating early inner ear development, acting independently of, and also redundantly with TBX3, in different subregions of the developing ear. Acts as a negative regulator of PML function in cellular senescence. Acts as a negative regulator of expression of CDKN1A/p21, IL33 and CCN4; repression of CDKN1A is enhanced in response to UV-induced stress, perhaps as a result of phosphorylation by p38 MAPK. Negatively modulates expression of CDKN2A/p19ARF and CDH1/E-cadherin. Plays a role in induction of the epithelial-mesenchymal transition (EMT). Plays a role in melanocyte proliferation, perhaps via regulation of cyclin CCND1. Involved in melanogenesis, acting via negative modulation of expression of DHICA oxidase/TYRP1 and P protein/OCA2. Involved in regulating retinal pigment epithelium (RPE) cell proliferation, perhaps via negatively modulating transcription of the transcription factor CEBPD. This Mus musculus (Mouse) protein is T-box transcription factor TBX2 (Tbx2).